The following is a 121-amino-acid chain: uncharacterized protein (121 aa).

This is an uncharacterized protein from Archaeoglobus fulgidus (strain ATCC 49558 / DSM 4304 / JCM 9628 / NBRC 100126 / VC-16).